Reading from the N-terminus, the 636-residue chain is Interleukin-27 receptor subunit alpha (636 aa).

Residues 1–32 (MRGGRGAPFWLWPLPKLALLPLLWVLFQRTRP) form the signal peptide. Residues 33-516 (QGSAGPLQCY…HLPDNTLRWK (484 aa)) are Extracellular-facing. N-linked (GlcNAc...) asparagine glycans are attached at residues Asn-51 and Asn-76. The region spanning 131-231 (PRLGPDVDFS…PILSFQTPPS (101 aa)) is the Fibronectin type-III 1 domain. A WSXWS motif motif is present at residues 217 to 221 (WGEWS). 5 N-linked (GlcNAc...) asparagine glycosylation sites follow: Asn-302, Asn-311, Asn-374, Asn-382, and Asn-467. Fibronectin type-III domains lie at 322–417 (APRS…LAPL) and 419–511 (GPTL…LPDN). Residues 517 to 537 (VLPGILFLWGLFLLGCGLSLA) traverse the membrane as a helical segment. Over 538 to 636 (TSGRCYHLRH…LGPPRPQVLA (99 aa)) the chain is Cytoplasmic. Positions 554-562 (VWEKVPDPA) match the Box 1 motif motif. Positions 587–636 (EVEEMEPPPVMESSQPAQATAPLDSGYEKHFLPTPEELGLLGPPRPQVLA) are disordered. The span at 618–628 (LPTPEELGLLG) shows a compositional bias: low complexity.

This sequence belongs to the type I cytokine receptor family. Type 2 subfamily. Component of a receptor complex composed of IL6ST/GP130, IL27RA/WSX1 and CNTFR which interacts with the neuroprotective peptide humanin. As to expression, highly expressed in lymphoid tissues such as spleen, lymph nodes and peripheral blood leukocytes. Weakly expressed in other tissues examined including heart, brain, fetal and adult lung, liver, skeletal muscle, kidney, pancreas, prostate, testis, ovary, small intestine, kidney and colon. In the lymphoid system, higher level expression in CD4+ T-cell subsets than in CD8+ T-cell subsets. Also weaker expression in CD19+ B-cells and monocytes.

Its subcellular location is the membrane. Receptor for IL27. Requires IL6ST/GP130 to mediate signal transduction in response to IL27. This signaling system acts through STAT3 and STAT1. Acts as a receptor for the neuroprotective peptide humanin as part of a complex with IL6ST/GP130 and CNTFR. Involved in the regulation of Th1-type immune responses. Also appears to be involved in innate defense mechanisms. The chain is Interleukin-27 receptor subunit alpha (IL27RA) from Homo sapiens (Human).